The primary structure comprises 323 residues: Rhazimal reductase 2 (323 aa).

Aspartate 53 provides a ligand contact to NADP(+). Tyrosine 58 (proton donor) is an active-site residue. NADP(+)-binding positions include 167–168, glutamine 189, 215–220, and 289–297; these read SN, WSPLLS, and DQIQQIPQR.

This sequence belongs to the aldo/keto reductase family. As to quaternary structure, monomer.

The enzyme catalyses rhazimol + NADP(+) = rhazimal + NADPH + 2 H(+). It functions in the pathway alkaloid biosynthesis. Its function is as follows. Oxidoreductase involved in the biosynthesis of akuammilan monoterpene indole alkaloids (MIAs) natural products, components with various biological properties such as antidiabetic, antibacterial, anti-inflammatory, anticancer, and antimalarial activities. Catalyzes the conversion of rhazimal to rhazimol. The chain is Rhazimal reductase 2 from Alstonia scholaris (Dogbane).